The chain runs to 731 residues: E3 ubiquitin-protein ligase SMURF1 (731 aa).

Positions 1-120 (MSNPGTRRNG…TGYQRLDLCK (120 aa)) constitute a C2 domain. Ser200 bears the Phosphoserine mark. Positions 216-237 (EVRGPLQTPQNRPHGHQSPELP) are disordered. WW domains lie at 234–267 (PELP…DPRI) and 280–313 (GPLP…DPRL). Glycyl lysine isopeptide (Lys-Gly) (interchain with G-Cter in ubiquitin) cross-links involve residues Lys355 and Lys357. In terms of domain architecture, HECT spans 394–731 (RPKDLKKRLM…VEETCGFAVE (338 aa)). The active-site Glycyl thioester intermediate is Cys699.

In terms of assembly, interacts with TRAF4. Interacts (via HECT domain) with FBXL15 (via LRR repeats). Interacts with SMAD7 and TGFBR1; SMAD7 recruits SMURF1 to TGFBR1 and regulates TGF-beta receptor degradation. Interacts with MAVS; the interaction is mediated by NDFIP1. In terms of processing, auto-ubiquitinated in presence of NDFIP1. Ubiquitinated by the SCF(FBXL15) complex at Lys-355 and Lys-357, leading to its degradation by the proteasome. Lys-357 is the primary ubiquitination site.

It localises to the cytoplasm. The protein localises to the cell membrane. The catalysed reaction is S-ubiquitinyl-[E2 ubiquitin-conjugating enzyme]-L-cysteine + [acceptor protein]-L-lysine = [E2 ubiquitin-conjugating enzyme]-L-cysteine + N(6)-ubiquitinyl-[acceptor protein]-L-lysine.. It participates in protein modification; protein ubiquitination. E3 ubiquitin-protein ligase that acts as a negative regulator of BMP signaling pathway. Mediates ubiquitination and degradation of SMAD1 and SMAD5, 2 receptor-regulated SMADs specific for the BMP pathway. Promotes ubiquitination and subsequent proteasomal degradation of TRAF family members and RHOA. Promotes ubiquitination and subsequent proteasomal degradation of MAVS. Acts as an antagonist of TGF-beta signaling by ubiquitinating TGFBR1 and targeting it for degradation. Plays a role in dendrite formation by melanocytes. In Mus musculus (Mouse), this protein is E3 ubiquitin-protein ligase SMURF1 (Smurf1).